The following is a 399-amino-acid chain: MTPSAASALVEKTPLETYVPPAKPSLIGLSRAQLCDRLGDVGVAPPQRKMRAQQLWHWMYVRGARDFSEMTNVSKEMRAMLAEHFTVDRPEVVAEQISADGTRKWLLRLPSGGDGQKAHEVECVYIPETDRGTLCVSSQVGCTLNCAFCHTGTQRLVRNLTAGEIVGQVMVARDRLGDWIDRETPNGNRLITNIVMMGMGEPLYNFDAVRDALLIVSDNEGIGISRRRITLSTSGVVPNIKRTGDEIGVMLAISLHAVRDELRDELVPLNRKYPLKELLQACRDYPGASNARRITFEYVMLKGVNDSLDDARKLVQLLKGIPAKINLIPFNPWPGSNYECSDWDQIEKFSEYVFNAGYSSPVRTPRGRDILAACGQLKSETEKLSVRERNALRAMAMTD.

E122 (proton acceptor) is an active-site residue. The 244-residue stretch at 128 to 371 (ETDRGTLCVS…VRTPRGRDIL (244 aa)) folds into the Radical SAM core domain. C135 and C374 form a disulfide bridge. [4Fe-4S] cluster-binding residues include C142, C146, and C149. Residues 200-201 (GE), S232, 254-256 (SLH), and N331 each bind S-adenosyl-L-methionine. The active-site S-methylcysteine intermediate is C374.

Belongs to the radical SAM superfamily. RlmN family. [4Fe-4S] cluster is required as a cofactor.

Its subcellular location is the cytoplasm. It carries out the reaction adenosine(2503) in 23S rRNA + 2 reduced [2Fe-2S]-[ferredoxin] + 2 S-adenosyl-L-methionine = 2-methyladenosine(2503) in 23S rRNA + 5'-deoxyadenosine + L-methionine + 2 oxidized [2Fe-2S]-[ferredoxin] + S-adenosyl-L-homocysteine. The catalysed reaction is adenosine(37) in tRNA + 2 reduced [2Fe-2S]-[ferredoxin] + 2 S-adenosyl-L-methionine = 2-methyladenosine(37) in tRNA + 5'-deoxyadenosine + L-methionine + 2 oxidized [2Fe-2S]-[ferredoxin] + S-adenosyl-L-homocysteine. Its function is as follows. Specifically methylates position 2 of adenine 2503 in 23S rRNA and position 2 of adenine 37 in tRNAs. m2A2503 modification seems to play a crucial role in the proofreading step occurring at the peptidyl transferase center and thus would serve to optimize ribosomal fidelity. This Rhodopseudomonas palustris (strain ATCC BAA-98 / CGA009) protein is Dual-specificity RNA methyltransferase RlmN.